The following is a 436-amino-acid chain: Na(+)/H(+) antiporter NhaA (436 aa).

11 helical membrane passes run 31-51 (VGGALLLAATIAALIWANSPG), 74-94 (LSLGAWASDGLLAIFFFIAGL), 112-132 (IVPIAAAIGGVAVPAIIYTLI), 143-163 (GWAIPTATDIAFALAVLAVIS), 173-193 (FLLTLAVVDDLIAISIIAVFY), 196-216 (NLQPQYLALALIPLGLFTWAV), 222-242 (SWYLLLPLAIITWVLVHESGV), 285-305 (VAVPIFAFFSAGVAIGGWAGF), 315-335 (IGIIAALILGKAIGIFGATFL), 350-370 (WIDVLGLAILAGIGFTVSLLI), and 384-404 (HAKVAILTASLVAALLATVIL).

It belongs to the NhaA Na(+)/H(+) (TC 2.A.33) antiporter family.

The protein resides in the cell membrane. The enzyme catalyses Na(+)(in) + 2 H(+)(out) = Na(+)(out) + 2 H(+)(in). Its function is as follows. Na(+)/H(+) antiporter that extrudes sodium in exchange for external protons. The polypeptide is Na(+)/H(+) antiporter NhaA (Renibacterium salmoninarum (strain ATCC 33209 / DSM 20767 / JCM 11484 / NBRC 15589 / NCIMB 2235)).